The following is a 375-amino-acid chain: Putative fimbrium tip subunit Fim1C (375 aa).

The first 16 residues, 1–16 (MKLLANIFLSGLAILA), serve as a signal peptide directing secretion. Cys17 carries N-palmitoyl cysteine lipidation. Cys17 carries the S-diacylglycerol cysteine lipid modification. Positions 17 to 47 (CVSCSKDEDPVLPLEGAKLSVAVKASGTATK) are excised as a propeptide.

The protein belongs to the bacteroidetes fimbrillin superfamily. FimA/Mfa1 family. May be part of the fimbrial tip.

It localises to the fimbrium. The protein resides in the cell outer membrane. In terms of biological role, probably a component of the fimbrium tip. Fimbriae are filamentous appendages on the cell surface that mediate cell adhesion and biofilm formation. The chain is Putative fimbrium tip subunit Fim1C from Parabacteroides distasonis (strain ATCC 8503 / DSM 20701 / CIP 104284 / JCM 5825 / NCTC 11152).